Reading from the N-terminus, the 473-residue chain is Tyrosine phenol-lyase (473 aa).

Lysine 257 is modified (N6-(pyridoxal phosphate)lysine).

It belongs to the beta-eliminating lyase family. Homotetramer. Pyridoxal 5'-phosphate serves as cofactor.

It carries out the reaction L-tyrosine + H2O = phenol + pyruvate + NH4(+). The sequence is that of Tyrosine phenol-lyase from Intrasporangium calvum (strain ATCC 23552 / DSM 43043 / JCM 3097 / NBRC 12989 / NCIMB 10167 / NRRL B-3866 / 7 KIP).